Consider the following 411-residue polypeptide: LL-diaminopimelate aminotransferase (411 aa).

Y15 and G42 together coordinate substrate. Pyridoxal 5'-phosphate contacts are provided by residues Y72, 108–109 (SK), Y132, N187, Y218, and 246–248 (SFS). 3 residues coordinate substrate: K109, Y132, and N187. Residue K249 is modified to N6-(pyridoxal phosphate)lysine. Residues R257 and N292 each coordinate pyridoxal 5'-phosphate. Substrate contacts are provided by N292 and R388.

This sequence belongs to the class-I pyridoxal-phosphate-dependent aminotransferase family. LL-diaminopimelate aminotransferase subfamily. As to quaternary structure, homodimer. Pyridoxal 5'-phosphate serves as cofactor.

It carries out the reaction (2S,6S)-2,6-diaminopimelate + 2-oxoglutarate = (S)-2,3,4,5-tetrahydrodipicolinate + L-glutamate + H2O + H(+). Its pathway is amino-acid biosynthesis; L-lysine biosynthesis via DAP pathway; LL-2,6-diaminopimelate from (S)-tetrahydrodipicolinate (aminotransferase route): step 1/1. Involved in the synthesis of meso-diaminopimelate (m-DAP or DL-DAP), required for both lysine and peptidoglycan biosynthesis. Catalyzes the direct conversion of tetrahydrodipicolinate to LL-diaminopimelate. The protein is LL-diaminopimelate aminotransferase of Gloeothece citriformis (strain PCC 7424) (Cyanothece sp. (strain PCC 7424)).